The following is a 150-amino-acid chain: Transcription antitermination protein NusB (150 aa).

The protein belongs to the NusB family.

In terms of biological role, involved in transcription antitermination. Required for transcription of ribosomal RNA (rRNA) genes. Binds specifically to the boxA antiterminator sequence of the ribosomal RNA (rrn) operons. This chain is Transcription antitermination protein NusB, found in Streptococcus pyogenes serotype M4 (strain MGAS10750).